A 257-amino-acid chain; its full sequence is uncharacterized protein (257 aa).

Position 7 to 14 (7 to 14 (GKGGVGKT)) interacts with ATP.

This sequence to M.jannaschii MJ0084 and MJ0685.

This is an uncharacterized protein from Methanocaldococcus jannaschii (strain ATCC 43067 / DSM 2661 / JAL-1 / JCM 10045 / NBRC 100440) (Methanococcus jannaschii).